A 350-amino-acid chain; its full sequence is Inactive ADP-ribosyltransferase arh2 (350 aa).

Belongs to the ADP-ribosylglycohydrolase family.

Its subcellular location is the cytoplasm. It is found in the myofibril. The protein resides in the sarcomere. Required for myofibril assembly and outgrowth of the cardiac chambers in the developing heart. Appears to be catalytically inactive, showing no activity against O-acetyl-ADP-ribose. The polypeptide is Inactive ADP-ribosyltransferase arh2 (adprhl1) (Danio rerio (Zebrafish)).